A 306-amino-acid chain; its full sequence is ATP synthase gamma chain (306 aa).

Belongs to the ATPase gamma chain family. F-type ATPases have 2 components, CF(1) - the catalytic core - and CF(0) - the membrane proton channel. CF(1) has five subunits: alpha(3), beta(3), gamma(1), delta(1), epsilon(1). CF(0) has three main subunits: a, b and c.

It is found in the cell membrane. Functionally, produces ATP from ADP in the presence of a proton gradient across the membrane. The gamma chain is believed to be important in regulating ATPase activity and the flow of protons through the CF(0) complex. In Bifidobacterium adolescentis (strain ATCC 15703 / DSM 20083 / NCTC 11814 / E194a), this protein is ATP synthase gamma chain.